A 408-amino-acid chain; its full sequence is Putative gustatory receptor 98c (408 aa).

The Cytoplasmic segment spans residues 1–42 (MEMEAKRSRLLTTARPYLQVLSLFGLTPPAEFFTRTLRKRRR). The chain crosses the membrane as a helical span at residues 43-63 (FCWMAGYSLYLIAILLMVFYE). Residues 64–92 (FHANIVSLHLEIYKFHVEDFSKVMGRTQK) lie on the Extracellular side of the membrane. The helical transmembrane segment at 93–113 (FLIVAIATCNQLNILLNYGRL) threads the bilayer. The Cytoplasmic segment spans residues 114 to 146 (GLIYDEIANLDLGIDKSSKNFCGKSHWWSFRLR). Residues 147–167 (LTLSIGLWMVIIIGVIPRLTL) form a helical membrane-spanning segment. Topologically, residues 168-183 (GRAGPFFHWVNQVLTQ) are extracellular. A helical membrane pass occupies residues 184 to 204 (IILIMLQLKGPEYCLFVLLVY). Residues 205 to 261 (ELILRTRHVLEQLKDDLEDFDCGARIQELCVTLKQNQLLIGRIWRLVDEIGAYFRWS) are Cytoplasmic-facing. Residues 262 to 282 (MTLLFLYNGLTILHVVNWAII) form a helical membrane-spanning segment. The Extracellular segment spans residues 283-296 (RSIDPNDCCQLNRL). Residues 297 to 317 (GSITFLSFNLLLTCFFSECCV) traverse the membrane as a helical segment. The Cytoplasmic segment spans residues 318–367 (KTYNSISYILHQIGCLPTAEEFQMLKMGLKEYILQMQHLKLLFTCGGLFD). The helical transmembrane segment at 368-388 (INIKLFGGMLVTLCGYVIIIV) threads the bilayer. Over 389 to 408 (QFKIQDFALIGYRQNTSDTS) the chain is Extracellular. The N-linked (GlcNAc...) asparagine glycan is linked to N403.

Belongs to the insect chemoreceptor superfamily. Gustatory receptor (GR) family. Gr2a subfamily.

It is found in the cell membrane. Probable gustatory receptor which mediates acceptance or avoidance behavior, depending on its substrates. This is Putative gustatory receptor 98c (Gr98c) from Drosophila melanogaster (Fruit fly).